The chain runs to 105 residues: ESAT-6-like protein EsxU (105 aa).

Belongs to the WXG100 family. CFP-10 subfamily. As to quaternary structure, forms a tight 1:1 complex with EsxT. Complex formation results in induction of alpha-helical conformation and stability against chemical denaturation.

The protein localises to the secreted. The chain is ESAT-6-like protein EsxU from Mycobacterium tuberculosis (strain ATCC 25618 / H37Rv).